Consider the following 190-residue polypeptide: MGIKEDNWIRKMAIEEGMIEPFADSQVKLHPETGEKLISYGLSSYGYDLRISREFKVFTNVYNSLVDPKCFTEDALISIVDDVCIIPPNSFALARSVEYFRIPRNVLTVCIGKSTYARCGLIVNVTPFEPEWEGYVTIEISNTTPLPAKVYANEGIAQVLFFEGDAACDVSYAERQGKYQKQQGITIPFV.

Position 113–118 (113–118 (KSTYAR)) interacts with dCTP. Glutamate 139 serves as the catalytic Proton donor/acceptor. Positions 158, 172, 181, and 182 each coordinate dCTP.

This sequence belongs to the dCTP deaminase family. As to quaternary structure, homotrimer.

The enzyme catalyses dCTP + H2O + H(+) = dUTP + NH4(+). It participates in pyrimidine metabolism; dUMP biosynthesis; dUMP from dCTP (dUTP route): step 1/2. Catalyzes the deamination of dCTP to dUTP. In Chlamydia trachomatis serovar L2 (strain ATCC VR-902B / DSM 19102 / 434/Bu), this protein is dCTP deaminase.